The following is a 640-amino-acid chain: MDYENQIANIFSLNGELSQNIKGFRPRAEQLEMAYAVGKAIQNKSSLVIEAGTGTGKTFAYLAPALVFGKKTIISTGSKNLQDQLFNRDLPAIKKALNFTGKIALLKGRANYLCLERLDQVIAQGVLGDKSVLAELSKVRKWNNSTKTGDFTECIELAEDSPIIPQLTSTAESCLGTDCPNYSECYVASARKKALNADLVVVNHHLFFADMAVKESGFGELIPNAEVIIFDEAHQLPDIASQYFGQSLTSRQLFDLCKDINIVYRTELKDMQQLGTTSDTLLKVVQDFRLLLGNGSNVRGNWRELYTQSAVKKAFELLQEKIDFLSEVIKLALGRSQTLDSIFERVESIKIQLKRLSETNIVGYCYWYEGNGRQFGLHITPLTVADKFGAQLEAKEAAWIFTSATLEVGGTFNHFCQRLGIENATQKILYSPFNYPEQSLLCVPRYLPNTNQMNTLNSLGEILLPVIEANKGRCFVLCTSYSMMRGLAEYFREKSHLSILLQGETSKGKLLEQFIKETHSVLVATSSFWEGVDVRGDALSLVIIDKLPFTAPDEPLLKARIEDCRLQGGDPFNDIQIPEAVITLKQGVGRLIRDVTDRGVVIICDNRLVMRNYGETFLKSLPNSSRTRDLNKVIQFLQNK.

A Helicase ATP-binding domain is found at 16 to 278 (ELSQNIKGFR…KDMQQLGTTS (263 aa)). 51 to 58 (AGTGTGKT) contacts ATP. Cys114 lines the [4Fe-4S] cluster pocket. Residues 125–128 (GVLG) carry the DEAH box motif. [4Fe-4S] cluster is bound by residues Cys174, Cys179, and Cys185. Positions 231–234 (DEAH) match the DEAH box motif. Positions 458 to 634 (SLGEILLPVI…SRTRDLNKVI (177 aa)) constitute a Helicase C-terminal domain.

It belongs to the helicase family. DinG subfamily. Requires [4Fe-4S] cluster as cofactor.

The catalysed reaction is Couples ATP hydrolysis with the unwinding of duplex DNA at the replication fork by translocating in the 5'-3' direction. This creates two antiparallel DNA single strands (ssDNA). The leading ssDNA polymer is the template for DNA polymerase III holoenzyme which synthesizes a continuous strand.. It catalyses the reaction ATP + H2O = ADP + phosphate + H(+). Its function is as follows. Probably a 5'-3' DNA helicase. The protein is ATP-dependent DNA helicase YoaA of Haemophilus influenzae (strain ATCC 51907 / DSM 11121 / KW20 / Rd).